Here is a 90-residue protein sequence, read N- to C-terminus: Small ribosomal subunit protein bS20 (90 aa).

Residues 1 to 11 (MAHHKSAKKRI) show a composition bias toward basic residues. The tract at residues 1-22 (MAHHKSAKKRIRQTERRTEVNR) is disordered. Basic and acidic residues predominate over residues 12–22 (RQTERRTEVNR).

It belongs to the bacterial ribosomal protein bS20 family.

Its function is as follows. Binds directly to 16S ribosomal RNA. The protein is Small ribosomal subunit protein bS20 of Paramagnetospirillum magneticum (strain ATCC 700264 / AMB-1) (Magnetospirillum magneticum).